The primary structure comprises 158 residues: 3-hydroxyacyl-[acyl-carrier-protein] dehydratase FabZ (158 aa).

The active site involves histidine 62.

It belongs to the thioester dehydratase family. FabZ subfamily.

The protein localises to the cytoplasm. It carries out the reaction a (3R)-hydroxyacyl-[ACP] = a (2E)-enoyl-[ACP] + H2O. Functionally, involved in unsaturated fatty acids biosynthesis. Catalyzes the dehydration of short chain beta-hydroxyacyl-ACPs and long chain saturated and unsaturated beta-hydroxyacyl-ACPs. The chain is 3-hydroxyacyl-[acyl-carrier-protein] dehydratase FabZ from Novosphingobium aromaticivorans (strain ATCC 700278 / DSM 12444 / CCUG 56034 / CIP 105152 / NBRC 16084 / F199).